The primary structure comprises 282 residues: tRNA (guanine-N(1)-)-methyltransferase (282 aa).

S-adenosyl-L-methionine is bound by residues Gly-157 and 177 to 182 (VGDYIL).

This sequence belongs to the RNA methyltransferase TrmD family. As to quaternary structure, homodimer.

It localises to the cytoplasm. The enzyme catalyses guanosine(37) in tRNA + S-adenosyl-L-methionine = N(1)-methylguanosine(37) in tRNA + S-adenosyl-L-homocysteine + H(+). Its function is as follows. Specifically methylates guanosine-37 in various tRNAs. The protein is tRNA (guanine-N(1)-)-methyltransferase of Rickettsia bellii (strain RML369-C).